The following is a 152-amino-acid chain: MSEQLNTMDIKEIMSFLPHRYPFLLIDRVLDYTPGETLHAIKNVTINEPFFQGHFPVQPVMPGVLILEAMAQATGLLAYKTMKEASEDSLYYFAGIDKARFKRVVEPGDQLHFEVKMIKERRGIGVFTGEVKVDGELVCSAEIMCARREISK.

The active site involves His-54.

It belongs to the thioester dehydratase family. FabZ subfamily.

It localises to the cytoplasm. The catalysed reaction is a (3R)-hydroxyacyl-[ACP] = a (2E)-enoyl-[ACP] + H2O. Its function is as follows. Involved in unsaturated fatty acids biosynthesis. Catalyzes the dehydration of short chain beta-hydroxyacyl-ACPs and long chain saturated and unsaturated beta-hydroxyacyl-ACPs. This Shewanella woodyi (strain ATCC 51908 / MS32) protein is 3-hydroxyacyl-[acyl-carrier-protein] dehydratase FabZ.